A 98-amino-acid chain; its full sequence is N(2)-fixation sustaining protein CowN (98 aa).

Belongs to the CowN family.

Is required to sustain N(2)-dependent growth in the presence of low levels of carbon monoxide (CO). Probably acts by protecting the N(2) fixation ability of the nitrogenase complex, which is inactivated in the presence of CO. In Dechloromonas aromatica (strain RCB), this protein is N(2)-fixation sustaining protein CowN.